A 437-amino-acid chain; its full sequence is MATVLIVGKSNVGKSTLFNKLIGKKKSIVDNKEGVTRDAVSDRVSYFGKSFKLIDTCGIFERPEDIISERLKNLTLNMLSEGDIIIFVVDGKYGLTSEDYHLADLLRKSNSDVILVVNKSENEKKVFVNFDDFYSLGFGEPLFISAEQGKNIDRLIEEVIKRLEKKGLKLEEEEEKDSIIRVALIGRPNAGKSTLFNGILERERALVTPIPGTTRDAIDELVEINGKKYLFIDTAGLRRKSKVEYKSIDMYSNVRSIKSIELSDVVVFVIDSLEGITHQDQKIAGIAENRGKATVVVFNKIDLVKNFKYRKQEFIEHFMERLYFVSYSPVVFVSAQERYGIGKLIKAIKEAYNSLFYRVQTSAVNAVIQRMIMFSPPPRGLKIYYGAQVDVKPPTFLFFTNGKKVPEFYQNNIRKIIRENIYHFTGAPIFLKFKNRH.

EngA-type G domains lie at 2–167 and 180–356; these read ATVL…EKKG and IRVA…NSLF. GTP is bound by residues 8–15, 55–59, 118–121, 186–193, 233–237, and 299–302; these read GKSNVGKS, DTCGI, NKSE, GRPNAGKS, DTAGL, and NKID. A KH-like domain is found at 357 to 437; that stretch reads YRVQTSAVNA…PIFLKFKNRH (81 aa).

This sequence belongs to the TRAFAC class TrmE-Era-EngA-EngB-Septin-like GTPase superfamily. EngA (Der) GTPase family. In terms of assembly, associates with the 50S ribosomal subunit.

Its function is as follows. GTPase that plays an essential role in the late steps of ribosome biogenesis. The protein is GTPase Der of Thermosipho melanesiensis (strain DSM 12029 / CIP 104789 / BI429).